We begin with the raw amino-acid sequence, 346 residues long: Phosphoribosylformylglycinamidine cyclo-ligase (346 aa).

This sequence belongs to the AIR synthase family.

The protein localises to the cytoplasm. The catalysed reaction is 2-formamido-N(1)-(5-O-phospho-beta-D-ribosyl)acetamidine + ATP = 5-amino-1-(5-phospho-beta-D-ribosyl)imidazole + ADP + phosphate + H(+). The protein operates within purine metabolism; IMP biosynthesis via de novo pathway; 5-amino-1-(5-phospho-D-ribosyl)imidazole from N(2)-formyl-N(1)-(5-phospho-D-ribosyl)glycinamide: step 2/2. This Bacillus cereus (strain ATCC 10987 / NRS 248) protein is Phosphoribosylformylglycinamidine cyclo-ligase.